A 767-amino-acid chain; its full sequence is MITYVFPGQGSQQKGMGQGLFEQYQHLTDQADQILGYSIEKLCTEKSYLDVNHTEYTQPALYVVNALSYLKRVEETGRKPDFAAGHSLGEYNALMAAGAFDFETGLRLVKKRGELMGRITGGGMAAVIGLSKEQVTAVLEEHRLYDIDVANENTPQQIVISGPKKEIEKARAVFENTKDVKLFHPLNVSGAFHSRYMNEAKQVFKQYIDSFQFAPLAIPVISNVYAEPYHQDRLKDTLSEQMDNTVKWTDSIRFLMGRGEMEFAEIGPGTVLTGLIHRIKNEAEPLTYIPKKNPAISAHLKEQRNVQAGITAESLGSAEFKQDYHLTYAYLAGGMYRGIASKEMVVKLSRAGMMGFFGTGGLSLKEVEDAIHAIQGELGKGQAYGINLVHNMKHTESEEKMIDLLLRNQVSIVEASAFLSVTPVLVRYRAKGVKRNQNGDVICSNRLIAKISRPEVAESFLSPAPENMLQKLLGENKITMNEAELLRCIPMADDICVEADSGGHTDGGVAYSLMPAMTSLRDEMMKKYQYRKKIRVGAAGGIGTPEAAMAAFMLGADFILTGSINQCTVEAATSDKVKDLLQQMNVQDTAYAPAGDMFESGSKVQVLKKGVFFPARANKLYELYQRYGSIRELDAKMLAQLEEKYFKRSIEDIYKDIALHYPAADIEKAEQNPKHKMALIFRWYFRYSSKLAISGSEHSKVDYQIHCGPALGAFNQWVKGSQLENWRNRHVDEIGKKLMTETAVLLHERMQSMYQPSHETDNIKIKV.

The interval 1–312 (MITYVFPGQG…QRNVQAGITA (312 aa)) is acyl transferase. Residues Ser87 and His193 contribute to the active site.

The protein in the N-terminal section; belongs to the FabD family.

The protein resides in the cytoplasm. The enzyme catalyses holo-[ACP] + malonyl-CoA = malonyl-[ACP] + CoA. It functions in the pathway antibiotic biosynthesis; bacillaene biosynthesis. Probably involved in some intermediate steps for the synthesis of the antibiotic polyketide bacillaene which is involved in secondary metabolism. Probably has an acyl transferase activity and could also have a flavin mononucleotide-dependent oxidoreductase activity. The polypeptide is Polyketide biosynthesis protein PksE (pksE) (Bacillus subtilis (strain 168)).